The following is a 953-amino-acid chain: Coatomer subunit beta (953 aa).

The residue at position 2 (Thr2) is an N-acetylthreonine. 6 HEAT repeats span residues 96–131, 132–168, 240–276, 277–314, 316–353, and 396–433; these read HEMI…KEAE, LLEP…NFEH, SERA…SAPT, AIKA…HPAH, RVLQ…SRNV, and DMAA…RFDN. N6-acetyllysine is present on Lys494.

As to quaternary structure, oligomeric complex that consists of at least the alpha, beta, beta', gamma, delta, epsilon and zeta subunits. Interacts (via C-terminus) with HIV-1 Nef; the interaction is direct. Interacts with CAPN8 and PRKCE. Interacts with SCYL1. Interacts with COPG1. Interacts with ARF1 (myristoylated); this interaction is required for binding of COPB1 to Golgi membranes. Interacts (via trunk domain) with ARF1 (via switch I region); the interaction is direct. Interacts with KCNK2 (via N-terminus); this interaction increases the channel-mediated whole cell currents and promotes plasma membrane expression of KCNK2. Interacts with anthrax lethal factor (LF); this interaction may facilitate endosomal vesicle membrane translocation of LF and its release from the lumen of endosomal vesicles to external milieu. Interacts with STX17. Interacts with TMEM115. Interacts with TMEM41B.

It localises to the cytoplasm. The protein localises to the golgi apparatus membrane. The protein resides in the cytoplasmic vesicle. Its subcellular location is the COPI-coated vesicle membrane. It is found in the cell membrane. It localises to the endoplasmic reticulum-Golgi intermediate compartment. Functionally, the coatomer is a cytosolic protein complex that binds to dilysine motifs and reversibly associates with Golgi non-clathrin-coated vesicles, which further mediate biosynthetic protein transport from the ER, via the Golgi up to the trans Golgi network. Coatomer complex is required for budding from Golgi membranes, and is essential for the retrograde Golgi-to-ER transport of dilysine-tagged proteins. In mammals, the coatomer can only be recruited by membranes associated to ADP-ribosylation factors (ARFs), which are small GTP-binding proteins; the complex also influences the Golgi structural integrity, as well as the processing, activity, and endocytic recycling of LDL receptors. Plays a functional role in facilitating the transport of kappa-type opioid receptor mRNAs into axons and enhances translation of these proteins. Required for limiting lipid storage in lipid droplets. Involved in lipid homeostasis by regulating the presence of perilipin family members PLIN2 and PLIN3 at the lipid droplet surface and promoting the association of adipocyte surface triglyceride lipase (PNPLA2) with the lipid droplet to mediate lipolysis. Involved in the Golgi disassembly and reassembly processes during cell cycle. Involved in autophagy by playing a role in early endosome function. Plays a role in organellar compartmentalization of secretory compartments including endoplasmic reticulum (ER)-Golgi intermediate compartment (ERGIC), Golgi, trans-Golgi network (TGN) and recycling endosomes, and in biosynthetic transport of CAV1. Promotes degradation of Nef cellular targets CD4 and MHC class I antigens by facilitating their trafficking to degradative compartments. This is Coatomer subunit beta (COPB1) from Pongo abelii (Sumatran orangutan).